The chain runs to 586 residues: 3-hydroxy-3-methylglutaryl-coenzyme A reductase 3 (586 aa).

A run of 2 helical transmembrane segments spans residues 36–59 (PSDY…FFSV) and 87–107 (ALIC…IGFV). A linker region spans residues 108–170 (HSFSRASTDS…STTTTSTLSD (63 aa)). Catalytic stretches follow at residues 171–586 (DDEQ…KITF) and 172–586 (DEQI…KITF). Residues Glu265, Lys397, and Asp473 each act as charge relay system in the active site. His571 serves as the catalytic Proton donor. N-linked (GlcNAc...) asparagine glycosylation is present at Asn575.

Belongs to the HMG-CoA reductase family.

Its subcellular location is the endoplasmic reticulum membrane. It localises to the mitochondrion membrane. The protein localises to the plastid membrane. The catalysed reaction is (R)-mevalonate + 2 NADP(+) + CoA = (3S)-3-hydroxy-3-methylglutaryl-CoA + 2 NADPH + 2 H(+). It functions in the pathway metabolic intermediate biosynthesis; (R)-mevalonate biosynthesis; (R)-mevalonate from acetyl-CoA: step 3/3. Its function is as follows. Catalyzes the synthesis of mevalonate. The specific precursor of all isoprenoid compounds present in plants. The chain is 3-hydroxy-3-methylglutaryl-coenzyme A reductase 3 (HMGR3) from Hevea brasiliensis (Para rubber tree).